A 1849-amino-acid chain; its full sequence is UPF0606 protein KIAA1549L (1849 aa).

Polar residues predominate over residues 1–10 (MDHTASQNAQ). 4 disordered regions span residues 1–70 (MDHT…LLQL), 142–166 (ATAN…PALS), 213–242 (PTEN…PATR), and 529–586 (RHSV…ERNA). Composition is skewed to polar residues over residues 529–541 (RHSV…QLPN) and 552–586 (PGPT…ERNA). Positions 958-986 (KFAQTMEQRLQKAFQDAERKVLNTKSNLT) form a coiled coil. A helical membrane pass occupies residues 1180 to 1200 (LWIIAAVLAPIAVVTVIIIII). Disordered stretches follow at residues 1258 to 1338 (LPIR…EEEG), 1460 to 1546 (SKNR…SQPS), 1656 to 1679 (RSTS…AQLH), and 1769 to 1819 (SRYP…APLT). Composition is skewed to polar residues over residues 1290–1319 (PSEN…AQQK), 1463–1482 (RQQM…SPSP), and 1537–1546 (ETSTLSSQPS). Low complexity-rich tracts occupy residues 1769–1786 (SRYP…YSQP) and 1795–1809 (QAPA…QSLA).

Belongs to the UPF0606 family.

The protein resides in the membrane. The protein is UPF0606 protein KIAA1549L (KIAA1549L) of Homo sapiens (Human).